The sequence spans 208 residues: Sodium/potassium-transporting ATPase subunit beta-1-interacting protein 2 (208 aa).

4 helical membrane passes run 1–23 (MGYC…CVLE), 35–55 (APIL…FGTI), 62–82 (ITGY…VICF), and 153–173 (LQIV…KCIT).

The protein belongs to the NKAIN family. Interacts with ATP1B1. As to expression, expressed in fetal brain. Weakly expressed in adult brain and thymus. Not expressed in any other normal tissue examined.

It localises to the cell membrane. The sequence is that of Sodium/potassium-transporting ATPase subunit beta-1-interacting protein 2 (NKAIN2) from Homo sapiens (Human).